Consider the following 62-residue polypeptide: Large ribosomal subunit protein bL28 (62 aa).

Belongs to the bacterial ribosomal protein bL28 family.

This chain is Large ribosomal subunit protein bL28, found in Streptococcus equi subsp. equi (strain 4047).